We begin with the raw amino-acid sequence, 238 residues long: Probable septum site-determining protein MinC (238 aa).

It belongs to the MinC family. Interacts with MinD and FtsZ.

In terms of biological role, cell division inhibitor that blocks the formation of polar Z ring septums. Rapidly oscillates between the poles of the cell to destabilize FtsZ filaments that have formed before they mature into polar Z rings. Prevents FtsZ polymerization. In Blochmanniella floridana, this protein is Probable septum site-determining protein MinC.